A 136-amino-acid polypeptide reads, in one-letter code: uncharacterized protein (136 aa).

Residues 14 to 34 (ASVFAFFVLFLFCLKIILVLF) traverse the membrane as a helical segment.

The protein resides in the membrane. This is an uncharacterized protein from Mycoplasma genitalium (strain ATCC 33530 / DSM 19775 / NCTC 10195 / G37) (Mycoplasmoides genitalium).